The primary structure comprises 362 residues: Lipoprotein p35 (362 aa).

The first 30 residues, 1-30, serve as a signal peptide directing secretion; that stretch reads MKIKKIKLLKALALTGAFGIVATVPVIVSS. Cys-31 carries the N-palmitoyl cysteine lipid modification. Cys-31 carries the S-diacylglycerol cysteine lipid modification. The disordered stretch occupies residues 33–53; it reads STSENNGNGNGNGGTDGNTQQ.

The protein belongs to the p35 lipoprotein family. Post-translationally, the N-terminus is blocked.

It localises to the cell membrane. Major M.penetrans antigen. This chain is Lipoprotein p35, found in Malacoplasma penetrans (Mycoplasma penetrans).